The following is an 855-amino-acid chain: Spindle and centriole-associated protein 1 (855 aa).

A disordered region spans residues 164–200; the sequence is QALNDVDGEEEGTVTSQSGESENENELDNSLNSQSNT. Threonine 235 carries the phosphothreonine modification. The segment covering 300 to 311 has biased composition (basic residues); the sequence is KPNLHALSKPKK. The disordered stretch occupies residues 300-328; that stretch reads KPNLHALSKPKKNMLSGSTTSADLPNRTN. Positions 314–328 are enriched in polar residues; the sequence is LSGSTTSADLPNRTN. Residues 325 to 437 are a coiled coil; it reads NRTNSNLDVL…TQARLRQYMV (113 aa). A phosphoserine mark is found at serine 640 and serine 644. Positions 725 to 751 form a coiled coil; sequence GSMEERIAELNRQSMEARGKLLQLIEQ. Phosphoserine is present on residues serine 760, serine 764, and serine 819. Positions 789–834 are disordered; the sequence is EAPESSKCSTVSPVSEINTRRSSGATSNSCSPLNATSGSGRFTPLN. Residues 794–828 are compositionally biased toward polar residues; the sequence is SKCSTVSPVSEINTRRSSGATSNSCSPLNATSGSG.

In terms of assembly, interacts with CEP120.

The protein localises to the cytoplasm. It localises to the cytoskeleton. The protein resides in the microtubule organizing center. Its subcellular location is the centrosome. It is found in the centriole. The protein localises to the spindle. Its function is as follows. Regulator required for centriole duplication, for proper bipolar spindle formation and chromosome congression in mitosis. The sequence is that of Spindle and centriole-associated protein 1 (SPICE1) from Pongo abelii (Sumatran orangutan).